The primary structure comprises 221 residues: GDP-perosamine N-acetyltransferase (221 aa).

The active-site Proton acceptor is His139.

The protein belongs to the transferase hexapeptide repeat family. Homotrimer.

The catalysed reaction is GDP-alpha-D-perosamine + acetyl-CoA = GDP-N-acetyl-alpha-D-perosamine + CoA + H(+). The protein operates within bacterial outer membrane biogenesis; LPS O-antigen biosynthesis. Functionally, catalyzes the transfer of an acetyl residue from acetyl-CoA onto GDP-perosamine to form GDP-N-acetyl-perosamine. The chain is GDP-perosamine N-acetyltransferase from Escherichia coli O157:H7.